Reading from the N-terminus, the 1117-residue chain is MTVSGRSSWQNGKTTNAMRAGKLATERDLESANYGSRSVEKLRHERAVGNLNKGRFLGMNKWSDEQLKHSMARYEDLAATRHNLFAVIMPSGCGKTSLARTYGMVDVDELVSRAEHDQYVEMRNEIVCGRGDWHDHNTLWFARLNQTLALLDYSVPVVIFVHTEETALEIGARPVACLTLETTAHEMNISGRGPKFREFSRESLRSCKPSNRVPNQYRFKSNKELEAFFLEVMNVSGLPVGAPFKYSTSIWNSSYSRDVPGWILRGERAGTQQVSINELRLLFEQGKIPKECVDYYVRASYVPTQFDFGVTMFEWSQALGQLPGCYNSRRDFDTLTDLMGVFPPHSPKEVTRSNVTLRTLCHTFDILSMPDAKEIASYHVGEGHTLVTNLLANWKGITQFTTVSHLVFPWFKVCERDWSDKMKTLHSLVRCSKFFMNTRITEKDRQALMYMDLLVGRGEYTVDEMAEVELRTDDTYNTKHLSYDPNRQVFTNQQYKKDFITSVEEAYVRLKIEPKPVNVDGFIDFYHRRASWLTKGGLVYNKLPPEMKKFGGQVFDAIYNTCREIQGRHNKKSLFEVYELAEVLQGANENNFNLTKTQIKYEVGKKDRTLLPGTLVHFVVFTYVLYLAEKQGQIGSVRLNTDSEVDIRYFDKKMCTGVFHVLYDWADFNEQHSAWEMGVVVDYLKHLIVAPRDYAVFVEAIVAGMYNMGLHDRDGNVHKIWRGLYSGWRGTTWINTVLNFCYVHIALQNVERLFGVRVVLYVDHGGDDIDLGLSEPAVMPWFLEVMDAMLFKANKWKQMFGTRSEFFRNTICDGRVYASPTRALASFVAGDWEGAGRATVKERVVSLLDQIAKLRRRGCSEELCQGLTIATISHWCRIKDGEDWLSLPAEIIHGHPDDGGLGVPDRDNNFWRLEEKVPEINEEWYKVVVPDYKASRDYVNVLARDVEKFSLVIEEREKLARKLSEDSYDIEKSVDHERWKHLLNFRTRVIAKELAVEPMEDSVVFEGFLEYEVEEGTEKKFDLASRYQEFVSYLSLNGRAITKEELLDLMSDGEVCLEAIEFQGDIYYARLVPEFIAYRATMFCKEAINKGVCDAISAQLFFRTICWMSASVFEHAI.

A compositionally biased stretch (polar residues) spans 1 to 17 (MTVSGRSSWQNGKTTNA). The disordered stretch occupies residues 1 to 23 (MTVSGRSSWQNGKTTNAMRAGKL).

The enzyme catalyses RNA(n) + a ribonucleoside 5'-triphosphate = RNA(n+1) + diphosphate. Its function is as follows. RNA-dependent RNA polymerase which replicates the viral genome. In Penicillium chrysogenum (Penicillium notatum), this protein is RNA-directed RNA polymerase (p1).